The following is a 205-amino-acid chain: Guanylate kinase (205 aa).

A Guanylate kinase-like domain is found at 6-184; sequence GLLIVLSGPA…AVERIKAIVT (179 aa). 13 to 20 serves as a coordination point for ATP; the sequence is GPAGVGKG.

It belongs to the guanylate kinase family.

The protein localises to the cytoplasm. It catalyses the reaction GMP + ATP = GDP + ADP. In terms of biological role, essential for recycling GMP and indirectly, cGMP. This is Guanylate kinase from Shouchella clausii (strain KSM-K16) (Alkalihalobacillus clausii).